Here is a 302-residue protein sequence, read N- to C-terminus: Protoheme IX farnesyltransferase (302 aa).

The next 9 membrane-spanning stretches (helical) occupy residues 26–46 (VVVLMVFTAIVGMFLASPGQV), 48–68 (WVALTVGSLGIALAAGSAAAL), 98–118 (VLGFSSLLGVAGLGMLALWIN), 120–140 (LTAALTFASLIGYALVYTLYL), 148–168 (IVIGGAAGAAPPLLGWTAVTG), 174–194 (ALLLFLIVFVWTPPHFWALAV), 221–241 (ILLYTVLLLAVSLLPWATFMG), 244–264 (LYLAAAVGLGGWYLMLNVRLL), and 280–300 (IIYLFGLFAALLVDRQLPVWL).

It belongs to the UbiA prenyltransferase family. Protoheme IX farnesyltransferase subfamily.

It is found in the cell inner membrane. It catalyses the reaction heme b + (2E,6E)-farnesyl diphosphate + H2O = Fe(II)-heme o + diphosphate. It participates in porphyrin-containing compound metabolism; heme O biosynthesis; heme O from protoheme: step 1/1. Functionally, converts heme B (protoheme IX) to heme O by substitution of the vinyl group on carbon 2 of heme B porphyrin ring with a hydroxyethyl farnesyl side group. This is Protoheme IX farnesyltransferase from Alkalilimnicola ehrlichii (strain ATCC BAA-1101 / DSM 17681 / MLHE-1).